The sequence spans 928 residues: Type II inositol 3,4-bisphosphate 4-phosphatase (928 aa).

A compositionally biased stretch (basic and acidic residues) spans 1–13 (MEIKEEGTSEEGQ). 3 disordered regions span residues 1–23 (MEIKEEGTSEEGQHFLPAAQAND), 481–516 (ILRKPPSPKVSTEEKSSQHDSPQQLRRQDSIPHHSD), and 548–575 (SRNDKSTGGDSSKDGDADPNLEDSLTSH). In terms of domain architecture, C2 spans 23–165 (DPEDIQFTSI…LKSKEQLLSL (143 aa)). Composition is skewed to basic and acidic residues over residues 506–516 (RRQDSIPHHSD) and 548–563 (SRNDKSTGGDSSKDGD).

This sequence belongs to the inositol 3,4-bisphosphate 4-phosphatase family.

It catalyses the reaction a 1,2-diacyl-sn-glycero-3-phospho-(1D-myo-inositol-3,4-bisphosphate) + H2O = a 1,2-diacyl-sn-glycero-3-phospho-(1D-myo-inositol-3-phosphate) + phosphate. The enzyme catalyses 1D-myo-inositol 3,4-bisphosphate + H2O = 1D-myo-inositol 3-phosphate + phosphate. It carries out the reaction 1D-myo-inositol 1,3,4-trisphosphate + H2O = 1D-myo-inositol 1,3-bisphosphate + phosphate. It functions in the pathway signal transduction; phosphatidylinositol signaling pathway. Its activity is regulated as follows. Strongly inhibited by inositol hexakisphosphate. In terms of biological role, catalyzes the hydrolysis of the 4-position phosphate of phosphatidylinositol 3,4-bisphosphate, inositol 1,3,4-trisphosphate and inositol 3,4-bisphosphate. Plays a role in the late stages of macropinocytosis by dephosphorylating phosphatidylinositol 3,4-bisphosphate in membrane ruffles. The lipid phosphatase activity is critical for tumor suppressor function. Antagonizes the PI3K-AKT/PKB signaling pathway by dephosphorylating phosphoinositides and thereby modulating cell cycle progression and cell survival. The protein is Type II inositol 3,4-bisphosphate 4-phosphatase (Inpp4b) of Rattus norvegicus (Rat).